A 305-amino-acid polypeptide reads, in one-letter code: Glutaminase (305 aa).

Substrate-binding residues include Ser-61, Asn-113, Glu-158, Asn-165, Tyr-189, Tyr-241, and Val-259.

The protein belongs to the glutaminase family. In terms of assembly, homotetramer.

It carries out the reaction L-glutamine + H2O = L-glutamate + NH4(+). The protein is Glutaminase of Alkaliphilus oremlandii (strain OhILAs) (Clostridium oremlandii (strain OhILAs)).